The sequence spans 71 residues: High-potential iron-sulfur protein (71 aa).

The residue at position 1 (glutamine 1) is a Pyrrolidone carboxylic acid. Cysteine 37, cysteine 40, cysteine 50, and cysteine 64 together coordinate [4Fe-4S] cluster.

Belongs to the high-potential iron-sulfur protein (HiPIP) family. As to quaternary structure, homodimer.

Its function is as follows. Specific class of high-redox-potential 4Fe-4S ferredoxins. Functions in anaerobic electron transport in most purple and in some other photosynthetic bacteria and in at least one genus (Paracoccus) of halophilic, denitrifying bacteria. This Halomonas halodenitrificans (strain ATCC 12084 / NCIMB 8669) (Paracoccus halodenitrificans) protein is High-potential iron-sulfur protein (hip).